The following is a 340-amino-acid chain: uncharacterized protein (340 aa).

This is an uncharacterized protein from Methanocaldococcus jannaschii (strain ATCC 43067 / DSM 2661 / JAL-1 / JCM 10045 / NBRC 100440) (Methanococcus jannaschii).